Reading from the N-terminus, the 193-residue chain is Xanthine phosphoribosyltransferase (193 aa).

Leucine 20 and asparagine 27 together coordinate xanthine. Position 129 to 133 (alanine 129 to alanine 133) interacts with 5-phospho-alpha-D-ribose 1-diphosphate. A xanthine-binding site is contributed by lysine 157.

The protein belongs to the purine/pyrimidine phosphoribosyltransferase family. Xpt subfamily. As to quaternary structure, homodimer.

Its subcellular location is the cytoplasm. It carries out the reaction XMP + diphosphate = xanthine + 5-phospho-alpha-D-ribose 1-diphosphate. It functions in the pathway purine metabolism; XMP biosynthesis via salvage pathway; XMP from xanthine: step 1/1. Converts the preformed base xanthine, a product of nucleic acid breakdown, to xanthosine 5'-monophosphate (XMP), so it can be reused for RNA or DNA synthesis. This Bifidobacterium longum subsp. infantis (strain ATCC 15697 / DSM 20088 / JCM 1222 / NCTC 11817 / S12) protein is Xanthine phosphoribosyltransferase.